The sequence spans 263 residues: Putative 2-aminoethylphosphonate transport system permease protein PhnV (263 aa).

The next 6 membrane-spanning stretches (helical) occupy residues G13–M33, L69–A89, V104–F124, M131–F151, L185–G205, and N233–M253. The ABC transmembrane type-1 domain occupies L65–M253.

The protein belongs to the binding-protein-dependent transport system permease family.

The protein localises to the cell inner membrane. In terms of biological role, probably part of the PhnSTUV complex (TC 3.A.1.11.5) involved in 2-aminoethylphosphonate import. Probably responsible for the translocation of the substrate across the membrane. This is Putative 2-aminoethylphosphonate transport system permease protein PhnV (phnV) from Salmonella typhi.